Consider the following 443-residue polypeptide: MIMKRVVIAGTSSEVGKTVISTGIMKALSKKYNVQGYKVGPDYIDPTYHTIATGNKSRNLDSFFMNKEQIKYLFQKHSKDKDISVIEGVRGLYEGISAIDDIGSTASVAKALDSPIILLVNAKSLTRSAIAIIKGFMSFDNVKIKGVIFNFVRSENHIKKLKDAMSYYLPDIEIIGFIPRNEDFKVEGRHLGLVPTPENLKEIESKIVLWGELVEKYLDLDKIVEIADEDFEEVDDVFLWEVNENYKKIAVAYDKAFNFYYWDNFEALKENKAKIEFFSPLKDSEVPDADILYIGGGYPELFKEELSRNKEMIESIKEFDGYIYGECGGLMYITKSIDNVPMVGLLNCSAVMTKHVQGLSYVKAEFLEDCLIGRKGLKFKGHEFHYSKLVNIKEERFAYKIERGRGIINNLDGIFNGKVLAGYLHNHAVANPYFASSMVNFGE.

The 186-residue stretch at 248-433 (KIAVAYDKAF…LHNHAVANPY (186 aa)) folds into the GATase cobBQ-type domain. The active-site Nucleophile is Cys327.

Belongs to the CobB/CbiA family. It depends on Mg(2+) as a cofactor.

It catalyses the reaction cob(II)yrinate + 2 L-glutamine + 2 ATP + 2 H2O = cob(II)yrinate a,c diamide + 2 L-glutamate + 2 ADP + 2 phosphate + 2 H(+). The enzyme catalyses Ni-sirohydrochlorin + 2 L-glutamine + 2 ATP + 2 H2O = Ni-sirohydrochlorin a,c-diamide + 2 L-glutamate + 2 ADP + 2 phosphate + 2 H(+). It functions in the pathway cofactor biosynthesis; adenosylcobalamin biosynthesis; cob(II)yrinate a,c-diamide from sirohydrochlorin (anaerobic route): step 10/10. Functionally, catalyzes the ATP-dependent amidation of the two carboxylate groups at positions a and c of cobyrinate, using either L-glutamine or ammonia as the nitrogen source. Involved in the biosynthesis of the unique nickel-containing tetrapyrrole coenzyme F430, the prosthetic group of methyl-coenzyme M reductase (MCR), which plays a key role in methanogenesis and anaerobic methane oxidation. Catalyzes the ATP-dependent amidation of the two carboxylate groups at positions a and c of Ni-sirohydrochlorin, using L-glutamine or ammonia as the nitrogen source. This is Cobyrinate a,c-diamide synthase from Methanocaldococcus jannaschii (strain ATCC 43067 / DSM 2661 / JAL-1 / JCM 10045 / NBRC 100440) (Methanococcus jannaschii).